The primary structure comprises 443 residues: Tubulin beta-2 chain (443 aa).

Positions 1–4 match the MREI motif motif; it reads MREI. GTP-binding residues include Q11, E69, S138, G142, T143, G144, N204, and N226. E69 contacts Mg(2+). E438 bears the 5-glutamyl polyglutamate mark.

The protein belongs to the tubulin family. In terms of assembly, dimer of alpha and beta chains. A typical microtubule is a hollow water-filled tube with an outer diameter of 25 nm and an inner diameter of 15 nM. Alpha-beta heterodimers associate head-to-tail to form protofilaments running lengthwise along the microtubule wall with the beta-tubulin subunit facing the microtubule plus end conferring a structural polarity. Microtubules usually have 13 protofilaments but different protofilament numbers can be found in some organisms and specialized cells. The cofactor is Mg(2+). In terms of processing, some glutamate residues at the C-terminus are polyglycylated, resulting in polyglycine chains on the gamma-carboxyl group. Glycylation is mainly limited to tubulin incorporated into axonemes (cilia and flagella) whereas glutamylation is prevalent in neuronal cells, centrioles, axonemes, and the mitotic spindle. Both modifications can coexist on the same protein on adjacent residues, and lowering polyglycylation levels increases polyglutamylation, and reciprocally. The precise function of polyglycylation is still unclear. Post-translationally, some glutamate residues at the C-terminus are polyglutamylated, resulting in polyglutamate chains on the gamma-carboxyl group. Polyglutamylation plays a key role in microtubule severing by spastin (SPAST). SPAST preferentially recognizes and acts on microtubules decorated with short polyglutamate tails: severing activity by SPAST increases as the number of glutamates per tubulin rises from one to eight, but decreases beyond this glutamylation threshold. In terms of tissue distribution, nervous system specific.

Its subcellular location is the cytoplasm. It is found in the cytoskeleton. Tubulin is the major constituent of microtubules, a cylinder consisting of laterally associated linear protofilaments composed of alpha- and beta-tubulin heterodimers. Microtubules grow by the addition of GTP-tubulin dimers to the microtubule end, where a stabilizing cap forms. Below the cap, tubulin dimers are in GDP-bound state, owing to GTPase activity of alpha-tubulin. This Xenopus laevis (African clawed frog) protein is Tubulin beta-2 chain (tubb2).